The chain runs to 294 residues: MELAQSSPDETDSVIVDDAAFEGAAHPLFSRMPSSVSFNKLRKRLLRQVRQALDDFGMLKGSRRWLVGVSGGKDSYSLLALLMDLQWRGLLPVELVACNLDQGQPNFPKHVLPDYLRSIGVKHRIEYRDTYSIVKEKVPAGATYCSLCSRLRRGNLYRIGREEGCDALVLGHHREDILETFFMNFFHGGRLASMPAKLLNDEGDLTVLRPLAYAAEDDLAKFAAAMEFPIIPCDLCGSQDGLERNAMKAMLADIERRMPGRKDTMLRALGHVNASHLLDPKLFDFQSLSPEPKE.

Residues 70–75 carry the PP-loop motif motif; that stretch reads SGGKDS. C145, C148, and C236 together coordinate [4Fe-4S] cluster.

The protein belongs to the TtcA family. Homodimer. It depends on Mg(2+) as a cofactor. The cofactor is [4Fe-4S] cluster.

Its subcellular location is the cytoplasm. The enzyme catalyses cytidine(32) in tRNA + S-sulfanyl-L-cysteinyl-[cysteine desulfurase] + AH2 + ATP = 2-thiocytidine(32) in tRNA + L-cysteinyl-[cysteine desulfurase] + A + AMP + diphosphate + H(+). It participates in tRNA modification. Its function is as follows. Catalyzes the ATP-dependent 2-thiolation of cytidine in position 32 of tRNA, to form 2-thiocytidine (s(2)C32). The sulfur atoms are provided by the cysteine/cysteine desulfurase (IscS) system. The protein is tRNA-cytidine(32) 2-sulfurtransferase of Rhizobium meliloti (strain 1021) (Ensifer meliloti).